A 125-amino-acid chain; its full sequence is Morphine 6-dehydrogenase (125 aa).

Residues 9–18 (GHSIPVLGFI) and 74–111 (SALG…IERE) contribute to the NADP(+) site.

Belongs to the aldo/keto reductase family. As to quaternary structure, monomer. Post-translationally, the N-terminus is blocked.

It is found in the cytoplasm. The enzyme catalyses morphine + NAD(+) = morphinone + NADH + H(+). It catalyses the reaction morphine + NADP(+) = morphinone + NADPH + H(+). Strongly inhibited by sulfhydryl reagents and quercetin, but not by pyrazole, barbital and indomethacine. Its function is as follows. Catalyzes the dehydrogenation of morphine to morphinone. Uses both NAD and NADP, but the activity is much greater with NAD than with NADP. This chain is Morphine 6-dehydrogenase, found in Oryctolagus cuniculus (Rabbit).